The following is a 248-amino-acid chain: Uracil-DNA glycosylase (248 aa).

Aspartate 85 functions as the Proton acceptor in the catalytic mechanism.

It belongs to the uracil-DNA glycosylase (UDG) superfamily. UNG family.

The protein localises to the cytoplasm. It catalyses the reaction Hydrolyzes single-stranded DNA or mismatched double-stranded DNA and polynucleotides, releasing free uracil.. Functionally, excises uracil residues from the DNA which can arise as a result of misincorporation of dUMP residues by DNA polymerase or due to deamination of cytosine. This Deinococcus deserti (strain DSM 17065 / CIP 109153 / LMG 22923 / VCD115) protein is Uracil-DNA glycosylase.